Reading from the N-terminus, the 403-residue chain is MMKYDHILVRYGEMTTKGKNRSKFVSTLKDNVKFKLKKFPNIKINATHDRMYIELNGEDHEAIAESLKDVFGIHKFNLAMKVPSELEEIKKGALAAFLLIKKPVKTFKITVHRSYKHFPMQTMELLPEIGGYVLENTEDIMVDVHNPDVNIRIEIRSGYSYIMCDERMGAGGLPVGVGGKVMVLLSGGIDSPVAAYLTMKRGVSVEAVHFHSPPFTSERAKQKVIDLAQELTKYCKRVTLHLVPFTEVQKTINKEIPSSYTMTVMRRMMMRITERIAEERNALAITTGESLGQVASQTLDSMHTINEVTNYPVLRPLITMDKLEIIKIANEIGTYDISIRPYEDCCTVFTPANPATKPKREKASRFEAKYDFTPLLEQAVANTETMVLQTVDKAEEDQFEDLF.

The THUMP domain maps to 61 to 166; sequence EAIAESLKDV…SGYSYIMCDE (106 aa). Residues 184–185, 209–210, R266, G288, and Q297 contribute to the ATP site; these read LL and HF.

It belongs to the ThiI family.

Its subcellular location is the cytoplasm. It carries out the reaction [ThiI sulfur-carrier protein]-S-sulfanyl-L-cysteine + a uridine in tRNA + 2 reduced [2Fe-2S]-[ferredoxin] + ATP + H(+) = [ThiI sulfur-carrier protein]-L-cysteine + a 4-thiouridine in tRNA + 2 oxidized [2Fe-2S]-[ferredoxin] + AMP + diphosphate. The enzyme catalyses [ThiS sulfur-carrier protein]-C-terminal Gly-Gly-AMP + S-sulfanyl-L-cysteinyl-[cysteine desulfurase] + AH2 = [ThiS sulfur-carrier protein]-C-terminal-Gly-aminoethanethioate + L-cysteinyl-[cysteine desulfurase] + A + AMP + 2 H(+). It participates in cofactor biosynthesis; thiamine diphosphate biosynthesis. In terms of biological role, catalyzes the ATP-dependent transfer of a sulfur to tRNA to produce 4-thiouridine in position 8 of tRNAs, which functions as a near-UV photosensor. Also catalyzes the transfer of sulfur to the sulfur carrier protein ThiS, forming ThiS-thiocarboxylate. This is a step in the synthesis of thiazole, in the thiamine biosynthesis pathway. The sulfur is donated as persulfide by IscS. The protein is Probable tRNA sulfurtransferase of Bacillus cytotoxicus (strain DSM 22905 / CIP 110041 / 391-98 / NVH 391-98).